The primary structure comprises 469 residues: UDP-N-acetylmuramate--L-alanine ligase (469 aa).

ATP is bound at residue Gly-112 to Thr-118.

The protein belongs to the MurCDEF family.

The protein resides in the cytoplasm. It catalyses the reaction UDP-N-acetyl-alpha-D-muramate + L-alanine + ATP = UDP-N-acetyl-alpha-D-muramoyl-L-alanine + ADP + phosphate + H(+). It functions in the pathway cell wall biogenesis; peptidoglycan biosynthesis. Cell wall formation. This chain is UDP-N-acetylmuramate--L-alanine ligase, found in Herminiimonas arsenicoxydans.